Reading from the N-terminus, the 309-residue chain is Malate dehydrogenase (309 aa).

NAD(+)-binding positions include 6–11 (GSGRVG) and Asp-31. The substrate site is built by Arg-80 and Arg-86. Residues Asn-93 and 116-118 (TTN) each bind NAD(+). Positions 118 and 149 each coordinate substrate. His-173 acts as the Proton acceptor in catalysis.

Belongs to the LDH/MDH superfamily. As to quaternary structure, homotetramer.

The catalysed reaction is (S)-malate + NAD(+) = oxaloacetate + NADH + H(+). In terms of biological role, catalyzes the reversible oxidation of malate to oxaloacetate. Exhibits higher specific activity for oxaloacetate reduction than for malate oxidation in vitro. Has a strong preference for NAD. Can use NADPH for oxaloacetate reduction, but activity decreases more than 90%. No activity detected with NADP(+) and malate. This is Malate dehydrogenase from Pyrobaculum islandicum (strain DSM 4184 / JCM 9189 / GEO3).